A 303-amino-acid polypeptide reads, in one-letter code: Putative AraC-like transcription regulator (303 aa).

One can recognise an HTH araC/xylS-type domain in the interval 202-300 (ASALTFLHRD…GMNPGDYRKH (99 aa)). DNA-binding regions (H-T-H motif) lie at residues 219 to 240 (AELASAAAVSRSTLAARFKATV) and 267 to 290 (LAAIAHSVGYGSESALSVAFKRVL).

The protein is Putative AraC-like transcription regulator of Streptomyces antibioticus.